The chain runs to 326 residues: Lipoyl synthase (326 aa).

Residues Cys-74, Cys-79, Cys-85, Cys-100, Cys-104, Cys-107, and Ser-314 each contribute to the [4Fe-4S] cluster site. Positions 85 to 303 (CFGRGTATFM…EEEAYKMGFS (219 aa)) constitute a Radical SAM core domain.

The protein belongs to the radical SAM superfamily. Lipoyl synthase family. [4Fe-4S] cluster serves as cofactor.

The protein localises to the cytoplasm. It carries out the reaction [[Fe-S] cluster scaffold protein carrying a second [4Fe-4S](2+) cluster] + N(6)-octanoyl-L-lysyl-[protein] + 2 oxidized [2Fe-2S]-[ferredoxin] + 2 S-adenosyl-L-methionine + 4 H(+) = [[Fe-S] cluster scaffold protein] + N(6)-[(R)-dihydrolipoyl]-L-lysyl-[protein] + 4 Fe(3+) + 2 hydrogen sulfide + 2 5'-deoxyadenosine + 2 L-methionine + 2 reduced [2Fe-2S]-[ferredoxin]. It functions in the pathway protein modification; protein lipoylation via endogenous pathway; protein N(6)-(lipoyl)lysine from octanoyl-[acyl-carrier-protein]: step 2/2. Its function is as follows. Catalyzes the radical-mediated insertion of two sulfur atoms into the C-6 and C-8 positions of the octanoyl moiety bound to the lipoyl domains of lipoate-dependent enzymes, thereby converting the octanoylated domains into lipoylated derivatives. In Acidovorax ebreus (strain TPSY) (Diaphorobacter sp. (strain TPSY)), this protein is Lipoyl synthase.